A 656-amino-acid polypeptide reads, in one-letter code: MADNLPTEFDVVIIGTGLPESILAAACSRSGQRVLHIDSRSYYGGNWASFSFSGLLSWLKEYQQNNDIGEESTVVWQDLIHETEEAITLRKKDETIQHTEAFCYASQDMEDNVEEIGALQKNPSLGVSNTFTEVLDSALPEESQLSYFNSDEMPAKHTQKSDTEISLEVTDVEESVEKEKYCGDKTCMHTVSDKDGDKDESKSTVEDKADEPIRNRITYSQIVKEGRRFNIDLVSKLLYSQGLLIDLLIKSDVSRYVEFKNVTRILAFREGKVEQVPCSRADVFNSKELTMVEKRMLMKFLTFCLEYEQHPDEYQAFRQCSFSEYLKTKKLTPNLQHFVLHSIAMTSESSCTTIDGLNATKNFLQCLGRFGNTPFLFPLYGQGEIPQGFCRMCAVFGGIYCLRHKVQCFVVDKESGRCKAIIDHFGQRINAKYFIVEDSYLSEETCSNVQYKQISRAVLITDQSILKTDLDQQTSILIVPPAEPGACAVRVTELCSSTMTCMKDTYLVHLTCSSSKTAREDLESVVKKLFTPYTETEINEEELTKPRLLWALYFNMRDSSGISRSSYNGLPSNVYVCSGPDCGLGNEHAVKQAETLFQEIFPTEEFCPPPPNPEDIIFDGDDKQPEAPGTNNVVMAKLESSEESKNLESPEKHLQN.

2 disordered regions span residues 188–209 (MHTVSDKDGDKDESKSTVEDKA) and 609–656 (PPPN…HLQN). Positions 639–656 (ESSEESKNLESPEKHLQN) are enriched in basic and acidic residues. A Phosphoserine modification is found at Ser649.

It belongs to the Rab GDI family. As to quaternary structure, monomer. Heterotrimer composed of RABGGTA, RABGGTB and CHML; within this trimer, RABGGTA and RABGGTB form the catalytic component B, while CHML (component A) mediates Rab protein binding. Interacts with RAB1A, RAB7A and RAB27A, but has much lower affinity for RAB1A, RAB7A and RAB27A than CHM. Interacts with the non-phosphorylated forms of RAB3A, RAB3B, RAB3C, RAB3D, RAB5B, RAB5C, RAB8A, RAB8B, RAB10, RAB12, RAB35, and RAB43.

The protein resides in the cytoplasm. It localises to the cytosol. Its function is as follows. Substrate-binding subunit (component A) of the Rab geranylgeranyltransferase (GGTase) complex. Binds unprenylated Rab proteins and presents the substrate peptide to the catalytic component B. The component A is thought to be regenerated by transferring its prenylated Rab back to the donor membrane. Less effective than CHM in supporting prenylation of Rab3 family. This chain is Rab proteins geranylgeranyltransferase component A 2 (CHML), found in Homo sapiens (Human).